A 142-amino-acid polypeptide reads, in one-letter code: Transcriptional regulator MraZ (142 aa).

2 SpoVT-AbrB domains span residues 5–51 and 77–120; these read ASAL…PRPE and AMDV…DAQT.

It belongs to the MraZ family. In terms of assembly, forms oligomers.

It is found in the cytoplasm. It localises to the nucleoid. This chain is Transcriptional regulator MraZ, found in Burkholderia mallei (strain NCTC 10247).